The sequence spans 332 residues: Autoinducer 2 import system permease protein LsrD (332 aa).

10 helical membrane-spanning segments follow: residues 7-27 (YSWE…FGVI), 45-65 (ICIG…GMDI), 70-90 (TIGL…PLPL), 91-111 (AIII…GLII), 118-138 (LVIT…LSGM), 162-182 (FLGI…FWLL), 216-236 (VYAM…SYFG), 240-260 (SDLG…GGAN), 261-281 (IYGG…VGFL), and 288-308 (AGVP…VVVV).

The protein belongs to the binding-protein-dependent transport system permease family. AraH/RbsC subfamily. As to quaternary structure, the complex is composed of two ATP-binding proteins (LsrA), two transmembrane proteins (LsrC and LsrD) and a solute-binding protein (LsrB).

Its subcellular location is the cell inner membrane. Part of the ABC transporter complex LsrABCD involved in autoinducer 2 (AI-2) import. Probably responsible for the translocation of the substrate across the membrane. The polypeptide is Autoinducer 2 import system permease protein LsrD (lsrD) (Salmonella paratyphi A (strain ATCC 9150 / SARB42)).